The sequence spans 197 residues: dTTP/UTP pyrophosphatase (197 aa).

Asp70 (proton acceptor) is an active-site residue.

The protein belongs to the Maf family. YhdE subfamily. A divalent metal cation is required as a cofactor.

Its subcellular location is the cytoplasm. The enzyme catalyses dTTP + H2O = dTMP + diphosphate + H(+). It catalyses the reaction UTP + H2O = UMP + diphosphate + H(+). In terms of biological role, nucleoside triphosphate pyrophosphatase that hydrolyzes dTTP and UTP. May have a dual role in cell division arrest and in preventing the incorporation of modified nucleotides into cellular nucleic acids. This is dTTP/UTP pyrophosphatase from Methanosarcina mazei (strain ATCC BAA-159 / DSM 3647 / Goe1 / Go1 / JCM 11833 / OCM 88) (Methanosarcina frisia).